The primary structure comprises 143 residues: Large ribosomal subunit protein uL22c (143 aa).

The protein belongs to the universal ribosomal protein uL22 family. As to quaternary structure, part of the 50S ribosomal subunit.

The protein resides in the plastid. Its subcellular location is the chloroplast. This protein binds specifically to 23S rRNA. In terms of biological role, the globular domain of the protein is located near the polypeptide exit tunnel on the outside of the subunit, while an extended beta-hairpin is found that lines the wall of the exit tunnel in the center of the 70S ribosome. The chain is Large ribosomal subunit protein uL22c (rpl22) from Piper cenocladum (Ant piper).